The primary structure comprises 74 residues: ATP synthase subunit c (74 aa).

The next 2 membrane-spanning stretches (helical) occupy residues 8-28 and 52-72; these read FIGI…VSNI and IGAG…MLLI.

Belongs to the ATPase C chain family. F-type ATPases have 2 components, F(1) - the catalytic core - and F(0) - the membrane proton channel. F(1) has five subunits: alpha(3), beta(3), gamma(1), delta(1), epsilon(1). F(0) has three main subunits: a(1), b(2) and c(10-14). The alpha and beta chains form an alternating ring which encloses part of the gamma chain. F(1) is attached to F(0) by a central stalk formed by the gamma and epsilon chains, while a peripheral stalk is formed by the delta and b chains.

It localises to the cell inner membrane. Functionally, f(1)F(0) ATP synthase produces ATP from ADP in the presence of a proton or sodium gradient. F-type ATPases consist of two structural domains, F(1) containing the extramembraneous catalytic core and F(0) containing the membrane proton channel, linked together by a central stalk and a peripheral stalk. During catalysis, ATP synthesis in the catalytic domain of F(1) is coupled via a rotary mechanism of the central stalk subunits to proton translocation. In terms of biological role, key component of the F(0) channel; it plays a direct role in translocation across the membrane. A homomeric c-ring of between 10-14 subunits forms the central stalk rotor element with the F(1) delta and epsilon subunits. This chain is ATP synthase subunit c, found in Rickettsia typhi (strain ATCC VR-144 / Wilmington).